Consider the following 337-residue polypeptide: Draxin (337 aa).

Positions 1–24 (MLLLALLLLLELSLAGSLGPGSSA) are cleaved as a signal peptide. Disordered stretches follow at residues 36–67 (GPALWTPQASHHRRRGLGKKERGPGTPGWTQD), 107–133 (RPYPEKETQAPGSERVKKRGREHKRRK), and 234–261 (WPSTRKKEKHRGKLSSDGNETSPAKGEP). Composition is skewed to basic residues over residues 122 to 133 (VKKRGREHKRRK) and 237 to 246 (TRKKEKHRGK). The N-linked (GlcNAc...) asparagine glycan is linked to Asn252.

The protein belongs to the draxin family. As to quaternary structure, interacts with LRP6.

It localises to the secreted. In terms of biological role, chemorepulsive axon guidance protein required for the development of spinal cord and forebrain commissures. Acts as a chemorepulsive guidance protein for commissural axons during development. Able to inhibit or repel neurite outgrowth from dorsal spinal cord. Inhibits the stabilization of cytosolic beta-catenin (CTNNB1) via its interaction with LRP6, thereby acting as an antagonist of Wnt signaling pathway. This Bos taurus (Bovine) protein is Draxin.